The sequence spans 168 residues: Protein-export protein SecB (168 aa).

The protein belongs to the SecB family. As to quaternary structure, homotetramer, a dimer of dimers. One homotetramer interacts with 1 SecA dimer.

It localises to the cytoplasm. Its function is as follows. One of the proteins required for the normal export of preproteins out of the cell cytoplasm. It is a molecular chaperone that binds to a subset of precursor proteins, maintaining them in a translocation-competent state. It also specifically binds to its receptor SecA. This Thioalkalivibrio sulfidiphilus (strain HL-EbGR7) protein is Protein-export protein SecB.